The chain runs to 185 residues: MASTALSSAFSLLSLPSSSSPAAAAAAAPRSFAVPSRARPRRAVAVVASTATESPKVLELGDAIAGLTLEEARGLVDHLQERLGVSAAAFAPAAVVAAPGAGGAGAAADEAPAEKTEFDVVIEEVPSSARIASIKVVRALTNLALKEAKDLIEGLPKKVKEGVSKDEAEDAKKQLEEVGAKVSIA.

The transit peptide at Met-1–Val-47 directs the protein to the chloroplast.

It belongs to the bacterial ribosomal protein bL12 family.

Its subcellular location is the plastid. The protein localises to the chloroplast. The chain is Large ribosomal subunit protein bL12c (RPL12-2) from Oryza sativa subsp. japonica (Rice).